The primary structure comprises 229 residues: Heptaprenylglyceryl phosphate synthase (229 aa).

Position 12 (lysine 12) interacts with sn-glycerol 1-phosphate. Residues aspartate 14 and serine 40 each contribute to the Mg(2+) site. Sn-glycerol 1-phosphate is bound by residues tyrosine 159–glycine 164, glycine 189, and glycine 209–asparagine 210.

This sequence belongs to the GGGP/HepGP synthase family. Group I subfamily. As to quaternary structure, homodimer. Mg(2+) is required as a cofactor.

The enzyme catalyses sn-glycerol 1-phosphate + all-trans-heptaprenyl diphosphate = 3-heptaprenyl-sn-glycero-1-phosphate + diphosphate. The protein operates within membrane lipid metabolism; glycerophospholipid metabolism. Prenyltransferase that catalyzes in vivo the transfer of the heptaprenyl moiety of heptaprenyl pyrophosphate (HepPP; 35 carbon atoms) to the C3 hydroxyl of sn-glycerol-1-phosphate (G1P), producing heptaprenylglyceryl phosphate (HepGP). This reaction is an ether-bond-formation step in the biosynthesis of archaea-type G1P-based membrane lipids found in Bacillales. This is Heptaprenylglyceryl phosphate synthase from Bacillus cereus (strain G9842).